The primary structure comprises 378 residues: Forkhead box protein I1 (378 aa).

2 disordered regions span residues 1–26 (MSSF…QEPP) and 208–278 (DNGN…APCL). A DNA-binding region (fork-head) is located at residues 123 to 217 (RPPYSYSALI…DNGNFRRKRK (95 aa)). The segment covering 236-248 (SSLPVDSPKTTEP) has biased composition (polar residues).

In terms of tissue distribution, expressed in kidney.

The protein localises to the nucleus. Its function is as follows. Transcriptional activator required for the development of normal hearing, sense of balance and kidney function. Required for the expression of SLC26A4/PDS, JAG1 and COCH in a subset of epithelial cells and the development of the endolymphatic system in the inner ear. Also required for the expression of SLC4A1/AE1, SLC4A9/AE4, ATP6V1B1 and the differentiation of intercalated cells in the epithelium of distal renal tubules. In Homo sapiens (Human), this protein is Forkhead box protein I1 (FOXI1).